The sequence spans 497 residues: 3-octaprenyl-4-hydroxybenzoate carboxy-lyase (497 aa).

Asparagine 172 is a binding site for Mn(2+). Residues 175–177 (IYR), 189–191 (RWL), and 194–195 (RG) each bind prenylated FMN. Glutamate 238 serves as a coordination point for Mn(2+). Aspartate 287 functions as the Proton donor in the catalytic mechanism.

The protein belongs to the UbiD family. As to quaternary structure, homohexamer. Prenylated FMN is required as a cofactor. It depends on Mn(2+) as a cofactor.

The protein localises to the cell membrane. The catalysed reaction is a 4-hydroxy-3-(all-trans-polyprenyl)benzoate + H(+) = a 2-(all-trans-polyprenyl)phenol + CO2. The protein operates within cofactor biosynthesis; ubiquinone biosynthesis. Catalyzes the decarboxylation of 3-octaprenyl-4-hydroxy benzoate to 2-octaprenylphenol, an intermediate step in ubiquinone biosynthesis. In Enterobacter sp. (strain 638), this protein is 3-octaprenyl-4-hydroxybenzoate carboxy-lyase.